The sequence spans 118 residues: 5-hydroxyisourate hydrolase (118 aa).

Residues His7, Arg46, and Tyr115 each contribute to the substrate site.

The protein belongs to the transthyretin family. 5-hydroxyisourate hydrolase subfamily. In terms of assembly, homotetramer.

It carries out the reaction 5-hydroxyisourate + H2O = 5-hydroxy-2-oxo-4-ureido-2,5-dihydro-1H-imidazole-5-carboxylate + H(+). In terms of biological role, catalyzes the hydrolysis of 5-hydroxyisourate (HIU) to 2-oxo-4-hydroxy-4-carboxy-5-ureidoimidazoline (OHCU). The chain is 5-hydroxyisourate hydrolase from Brucella suis biovar 1 (strain 1330).